The following is a 418-amino-acid chain: STE20-related kinase adapter protein beta (418 aa).

A Protein kinase domain is found at 58-369 (YELQVEIGRG…ASSLLSHVFF (312 aa)). Residues 64-72 (IGRGFDNLT) and lysine 89 contribute to the ATP site.

It belongs to the protein kinase superfamily. STE Ser/Thr protein kinase family. STE20 subfamily. In terms of assembly, component of a trimeric complex composed of STK11/LKB1, STRAD (STRADA or STRADB) and CAB39/MO25 (CAB39/MO25alpha or CAB39L/MO25beta): the complex tethers STK11/LKB1 in the cytoplasm and stimulates its catalytic activity. Interacts with BIRC4/XIAP. These two proteins are likely to coexist in a complex with TAK1, TRAF6, TAB1 and TAB2.

The protein resides in the nucleus. It localises to the cytoplasm. In terms of biological role, pseudokinase which, in complex with CAB39/MO25 (CAB39/MO25alpha or CAB39L/MO25beta), binds to and activates STK11/LKB1. Adopts a closed conformation typical of active protein kinases and binds STK11/LKB1 as a pseudosubstrate, promoting conformational change of STK11/LKB1 in an active conformation. The sequence is that of STE20-related kinase adapter protein beta (Stradb) from Mus musculus (Mouse).